The primary structure comprises 209 residues: Potassium-transporting ATPase KdpC subunit (209 aa).

Residues 18-38 (MLAVFTLFGLGLAYSLVATGI) traverse the membrane as a helical segment.

The protein belongs to the KdpC family. As to quaternary structure, the system is composed of three essential subunits: KdpA, KdpB and KdpC.

Its subcellular location is the cell inner membrane. Part of the high-affinity ATP-driven potassium transport (or Kdp) system, which catalyzes the hydrolysis of ATP coupled with the electrogenic transport of potassium into the cytoplasm. This subunit acts as a catalytic chaperone that increases the ATP-binding affinity of the ATP-hydrolyzing subunit KdpB by the formation of a transient KdpB/KdpC/ATP ternary complex. This chain is Potassium-transporting ATPase KdpC subunit, found in Xanthomonas oryzae pv. oryzae (strain MAFF 311018).